The chain runs to 138 residues: Nucleoside diphosphate kinase (138 aa).

ATP contacts are provided by K12, Y60, R88, T94, R105, and N115. H118 (pros-phosphohistidine intermediate) is an active-site residue.

The protein belongs to the NDK family. As to quaternary structure, homotetramer. Mg(2+) is required as a cofactor.

It is found in the cytoplasm. The catalysed reaction is a 2'-deoxyribonucleoside 5'-diphosphate + ATP = a 2'-deoxyribonucleoside 5'-triphosphate + ADP. It carries out the reaction a ribonucleoside 5'-diphosphate + ATP = a ribonucleoside 5'-triphosphate + ADP. Functionally, major role in the synthesis of nucleoside triphosphates other than ATP. The ATP gamma phosphate is transferred to the NDP beta phosphate via a ping-pong mechanism, using a phosphorylated active-site intermediate. The polypeptide is Nucleoside diphosphate kinase (Cutibacterium acnes (strain DSM 16379 / KPA171202) (Propionibacterium acnes)).